A 32-amino-acid chain; its full sequence is Cytochrome b6-f complex subunit 7 (32 aa).

The chain crosses the membrane as a helical span at residues 9–27 (AAVFWVLIPVGLLGGVLLL).

It belongs to the PetM family. In terms of assembly, the 4 large subunits of the cytochrome b6-f complex are cytochrome b6, subunit IV (17 kDa polypeptide, PetD), cytochrome f and the Rieske protein, while the 4 small subunits are PetG, PetL, PetM and PetN. The complex functions as a dimer.

It localises to the cellular thylakoid membrane. Component of the cytochrome b6-f complex, which mediates electron transfer between photosystem II (PSII) and photosystem I (PSI), cyclic electron flow around PSI, and state transitions. The chain is Cytochrome b6-f complex subunit 7 from Prochlorococcus marinus (strain NATL1A).